We begin with the raw amino-acid sequence, 78 residues long: Cytochrome b-c1 complex subunit 10, mitochondrial (78 aa).

Residues 1–26 (MVSYVKGPAYKALSHFGKLNAPLVRS) are Mitochondrial matrix-facing. A helical membrane pass occupies residues 27-46 (YIPNLVFWGAAAGGAVATFT). Over 47-78 (EGVPLFQKTFYEKIPFFGQHWIYNPDPEDVPV) the chain is Mitochondrial intermembrane.

The protein belongs to the UQCR11/QCR10 family. As to quaternary structure, component of the ubiquinol-cytochrome c oxidoreductase (cytochrome b-c1 complex, complex III, CIII), a multisubunit enzyme composed of 10 subunits. The complex is composed of 3 respiratory subunits cytochrome b (COB), cytochrome c1 (CYT1) and Rieske protein (RIP1), 2 core protein subunits COR1 and QCR2, and 5 low-molecular weight protein subunits QCR6, QCR7, QCR8, QCR9 and QCR10. The complex exists as an obligatory dimer and forms supercomplexes (SCs) in the inner mitochondrial membrane with a monomer or a dimer of cytochrome c oxidase (complex IV, CIV), resulting in 2 different assemblies (supercomplexes III(2)IV and III(2)IV(2)).

Its subcellular location is the mitochondrion inner membrane. Component of the ubiquinol-cytochrome c oxidoreductase, a multisubunit transmembrane complex that is part of the mitochondrial electron transport chain which drives oxidative phosphorylation. The complex plays an important role in the uptake of multiple carbon sources present in different host niches. The polypeptide is Cytochrome b-c1 complex subunit 10, mitochondrial (Candida albicans (strain SC5314 / ATCC MYA-2876) (Yeast)).